Reading from the N-terminus, the 181-residue chain is Oligoribonuclease (181 aa).

The Exonuclease domain occupies 8-171; it reads LIWIDLEMTG…DDIRESIAEL (164 aa). Residue Tyr129 is part of the active site.

It belongs to the oligoribonuclease family.

It localises to the cytoplasm. Its function is as follows. 3'-to-5' exoribonuclease specific for small oligoribonucleotides. The protein is Oligoribonuclease of Vibrio vulnificus (strain CMCP6).